A 199-amino-acid polypeptide reads, in one-letter code: uncharacterized protein (199 aa).

It localises to the mitochondrion. This is an uncharacterized protein from Schizosaccharomyces pombe (strain 972 / ATCC 24843) (Fission yeast).